The sequence spans 1568 residues: Kielin/chordin-like protein (1568 aa).

The signal sequence occupies residues 1–23; sequence MAGVGAAALSLLLHLGALALAAG. Residues 27-49 are disordered; that stretch reads GAVPREPPGQQTTAHSSVLAGNS. Residues 35 to 49 show a composition bias toward polar residues; sequence GQQTTAHSSVLAGNS. Residues 60–87 adopt a coiled-coil conformation; the sequence is LGRLEAAVMELREQNKDLQTRVRQLESC. 16 consecutive VWFC domains span residues 136–193, 194–253, 253–312, 312–370, 426–485, 485–544, 544–602, 602–661, 667–725, 725–782, 782–841, 900–959, 959–1017, 1017–1085, 1082–1145, and 1149–1209; these read RGCS…PICR, PGCD…PTCQ, QGCT…PVCD, DGCF…PVCD, PACE…PSCD, DSCT…PRCP, PDCI…NDCS, SGCA…PQCP, AGCP…PSCD, DGCL…PDCD, DGCE…PTCQ, HSCL…PRCR, RGCL…PQCS, SDCE…PTCA, PTCA…PVCR, and QSCV…PRCL. Asn340 is a glycosylation site (N-linked (GlcNAc...) asparagine). A glycan (N-linked (GlcNAc...) asparagine) is linked at Asn499. The N-linked (GlcNAc...) asparagine glycan is linked to Asn1090. Positions 1213 to 1389 constitute a VWFD domain; sequence ASCMAFGDPH…EGLWPGRPCS (177 aa). 2 cysteine pairs are disulfide-bonded: Cys1215–Cys1347 and Cys1237–Cys1388. Residues 1483-1543 form the TIL domain; that stretch reads CPLERGFVFD…EAHCIPPEAC (61 aa).

In terms of assembly, interacts with BMP7 and, by doing so, enhances binding to the type I receptors that contains cytoplasmic serine/threonine protein kinase domains. Also able to interact with activin-A and TGFB1.

The protein localises to the secreted. Its function is as follows. Enhances bone morphogenetic protein (BMP) signaling in a paracrine manner. In contrast, it inhibits both the activin-A and TGFB1-mediated signaling pathways. In Homo sapiens (Human), this protein is Kielin/chordin-like protein.